Reading from the N-terminus, the 494-residue chain is Tetracenomycin biosynthesis bifunctional cyclase/O-methyl transferase TcmN (494 aa).

The tract at residues 11–140 (VNAPFELVWD…TTTRANMERI (130 aa)) is polyketide cyclase. The active-site Proton acceptor; for cyclase activity is serine 67. Active-site proton donor; for cyclase activity residues include arginine 69 and arginine 82. Positions 169–494 (LLLAASGRLA…TWTTLECRPV (326 aa)) are methyltransferase. S-adenosyl-L-methionine-binding positions include aspartate 358 and 384-386 (GDF). Histidine 405 (proton acceptor; for methyltransferase activity) is an active-site residue.

This sequence in the C-terminal section; belongs to the class I-like SAM-binding methyltransferase superfamily. Cation-independent O-methyltransferase family. In terms of assembly, the tetracenomycin polyketide synthase (TCM PKS) is composed of a ketosynthase complex (TcmKL), an acyl carrier protein (TcmM), a cyclase (TcmN) and a probable second cyclase (TcmJ). TcmN is a homodimer in solution.

The enzyme catalyses 10 malonyl-CoA + 8 H(+) = tetracenomycin F2 + 10 CO2 + 10 CoA + 2 H2O. The protein operates within antibiotic biosynthesis; tetracenomycin C biosynthesis. Its function is as follows. Involved in the biosynthesis of tetracenomycin C (TCM C). Part of a type II polyketide synthase (PKS) that catalyzes the synthesis of tetracenomycin F2 (TCM F2), a precursor of TCM C, from malonyl-CoA. The TcmN N-terminal domain, when coupled with the other components of the PKS, catalyzes the cyclization and aromatization of the linear polyketide intermediate. Catalyzes the cyclization of the first and second rings. In addition, the C-terminal domain acts as a methyltransferase. It catalyzes the specific O-methylation of tetracenomycin D3 (TCM D3) to TCM B3, using S-adenosyl-L-methionine as the methyl donor. In Streptomyces glaucescens, this protein is Tetracenomycin biosynthesis bifunctional cyclase/O-methyl transferase TcmN.